The primary structure comprises 121 residues: Large ribosomal subunit protein bL19 (121 aa).

This sequence belongs to the bacterial ribosomal protein bL19 family.

Its function is as follows. This protein is located at the 30S-50S ribosomal subunit interface and may play a role in the structure and function of the aminoacyl-tRNA binding site. The polypeptide is Large ribosomal subunit protein bL19 (Symbiobacterium thermophilum (strain DSM 24528 / JCM 14929 / IAM 14863 / T)).